The primary structure comprises 455 residues: Immunoglobulin alpha-2 heavy chain (455 aa).

4 consecutive Ig-like domains span residues E1 to C95, P121 to T213, P227 to T322, and P330 to D432. The segment at E1–S115 is variable (V) domain, involved in antigen recognition. Cystine bridges form between C22–C95 and C141–C200. Residues A116 to Y455 form a constant (C) domain region. N-linked (GlcNAc...) asparagine glycans are attached at residues N162, N207, and N246. Disulfide bonds link C225-C282 and C249-C306. A glycan (N-linked (GlcNAc...) asparagine) is linked at N320. C352 and C415 are oxidised to a cystine. A glycan (N-linked (GlcNAc...) asparagine) is linked at N442.

Immunoglobulins are composed of two identical heavy chains and two identical light chains; disulfide-linked. Monomeric or polymeric.

It is found in the secreted. The protein resides in the cell membrane. Functionally, immunoglobulins, also known as antibodies, are membrane-bound or secreted glycoproteins produced by B lymphocytes. In the recognition phase of humoral immunity, the membrane-bound immunoglobulins serve as receptors which, upon binding of a specific antigen, trigger the clonal expansion and differentiation of B lymphocytes into immunoglobulins-secreting plasma cells. Secreted immunoglobulins mediate the effector phase of humoral immunity, which results in the elimination of bound antigens. The antigen binding site is formed by the variable domain of one heavy chain, together with that of its associated light chain. Thus, each immunoglobulin has two antigen binding sites with remarkable affinity for a particular antigen. The variable domains are assembled by a process called V-(D)-J rearrangement and can then be subjected to somatic hypermutations which, after exposure to antigen and selection, allow affinity maturation for a particular antigen. Ig alpha is the major immunoglobulin class in body secretions. The sequence is that of Immunoglobulin alpha-2 heavy chain from Homo sapiens (Human).